A 392-amino-acid polypeptide reads, in one-letter code: Formate-dependent phosphoribosylglycinamide formyltransferase (392 aa).

Residues glutamate 12–leucine 13 and glutamate 72 each bind N(1)-(5-phospho-beta-D-ribosyl)glycinamide. Residues arginine 104, lysine 145, serine 150–glutamine 155, glutamate 185–valine 188, and glutamate 193 contribute to the ATP site. The 192-residue stretch at aspartate 109 to leucine 300 folds into the ATP-grasp domain. Mg(2+) contacts are provided by glutamate 258 and glutamate 270. Residues aspartate 277, lysine 348, and arginine 355 to arginine 356 contribute to the N(1)-(5-phospho-beta-D-ribosyl)glycinamide site.

This sequence belongs to the PurK/PurT family. In terms of assembly, homodimer.

The enzyme catalyses N(1)-(5-phospho-beta-D-ribosyl)glycinamide + formate + ATP = N(2)-formyl-N(1)-(5-phospho-beta-D-ribosyl)glycinamide + ADP + phosphate + H(+). Its pathway is purine metabolism; IMP biosynthesis via de novo pathway; N(2)-formyl-N(1)-(5-phospho-D-ribosyl)glycinamide from N(1)-(5-phospho-D-ribosyl)glycinamide (formate route): step 1/1. Its function is as follows. Involved in the de novo purine biosynthesis. Catalyzes the transfer of formate to 5-phospho-ribosyl-glycinamide (GAR), producing 5-phospho-ribosyl-N-formylglycinamide (FGAR). Formate is provided by PurU via hydrolysis of 10-formyl-tetrahydrofolate. This Chlorobaculum tepidum (strain ATCC 49652 / DSM 12025 / NBRC 103806 / TLS) (Chlorobium tepidum) protein is Formate-dependent phosphoribosylglycinamide formyltransferase.